Consider the following 210-residue polypeptide: LexA repressor (210 aa).

Positions 30–50 form a DNA-binding region, H-T-H motif; that stretch reads RVEIAREIGFKSPNAAEEHLK. Catalysis depends on for autocatalytic cleavage activity residues Ser-127 and Lys-164.

The protein belongs to the peptidase S24 family. As to quaternary structure, homodimer.

It carries out the reaction Hydrolysis of Ala-|-Gly bond in repressor LexA.. Functionally, represses a number of genes involved in the response to DNA damage (SOS response), including recA and lexA. In the presence of single-stranded DNA, RecA interacts with LexA causing an autocatalytic cleavage which disrupts the DNA-binding part of LexA, leading to derepression of the SOS regulon and eventually DNA repair. This is LexA repressor from Actinobacillus pleuropneumoniae serotype 7 (strain AP76).